The chain runs to 181 residues: Bifunctional protein PyrR (181 aa).

The PRPP-binding motif lies at 101-113 (VILVDDVLFTGRT).

The protein belongs to the purine/pyrimidine phosphoribosyltransferase family. PyrR subfamily.

It catalyses the reaction UMP + diphosphate = 5-phospho-alpha-D-ribose 1-diphosphate + uracil. Regulates the transcription of the pyrimidine nucleotide (pyr) operon in response to exogenous pyrimidines. Its function is as follows. Also displays a weak uracil phosphoribosyltransferase activity which is not physiologically significant. The protein is Bifunctional protein PyrR of Desulfosudis oleivorans (strain DSM 6200 / JCM 39069 / Hxd3) (Desulfococcus oleovorans).